Reading from the N-terminus, the 216-residue chain is Uracil phosphoribosyltransferase (216 aa).

Residues Arg-85, Arg-110, and Asp-135–Ser-143 contribute to the 5-phospho-alpha-D-ribose 1-diphosphate site. Uracil contacts are provided by residues Ile-200 and Gly-205 to Ala-207. Asp-206 provides a ligand contact to 5-phospho-alpha-D-ribose 1-diphosphate.

Belongs to the UPRTase family. Mg(2+) is required as a cofactor.

It carries out the reaction UMP + diphosphate = 5-phospho-alpha-D-ribose 1-diphosphate + uracil. It functions in the pathway pyrimidine metabolism; UMP biosynthesis via salvage pathway; UMP from uracil: step 1/1. Allosterically activated by GTP. In terms of biological role, catalyzes the conversion of uracil and 5-phospho-alpha-D-ribose 1-diphosphate (PRPP) to UMP and diphosphate. In Burkholderia vietnamiensis (strain G4 / LMG 22486) (Burkholderia cepacia (strain R1808)), this protein is Uracil phosphoribosyltransferase.